The chain runs to 450 residues: Tubulin alpha-4 chain (450 aa).

Residue Q11 coordinates GTP. An N6-acetyllysine modification is found at K40. The GTP site is built by E71, G144, T145, T179, N206, and N228. E71 is a binding site for Mg(2+). E254 is a catalytic residue. The segment at 431–450 is disordered; the sequence is DYEEVGAESGEGDEGDEEEY.

Belongs to the tubulin family. Dimer of alpha and beta chains. A typical microtubule is a hollow water-filled tube with an outer diameter of 25 nm and an inner diameter of 15 nM. Alpha-beta heterodimers associate head-to-tail to form protofilaments running lengthwise along the microtubule wall with the beta-tubulin subunit facing the microtubule plus end conferring a structural polarity. Microtubules usually have 13 protofilaments but different protofilament numbers can be found in some organisms and specialized cells. It depends on Mg(2+) as a cofactor. Post-translationally, undergoes a tyrosination/detyrosination cycle, the cyclic removal and re-addition of a C-terminal tyrosine residue by the enzymes tubulin tyrosine carboxypeptidase (TTCP) and tubulin tyrosine ligase (TTL), respectively. Acetylation of alpha chains at Lys-40 stabilizes microtubules and affects affinity and processivity of microtubule motors. This modification has a role in multiple cellular functions, ranging from cell motility, cell cycle progression or cell differentiation to intracellular trafficking and signaling.

The protein localises to the cytoplasm. The protein resides in the cytoskeleton. The enzyme catalyses GTP + H2O = GDP + phosphate + H(+). Tubulin is the major constituent of microtubules, a cylinder consisting of laterally associated linear protofilaments composed of alpha- and beta-tubulin heterodimers. Microtubules grow by the addition of GTP-tubulin dimers to the microtubule end, where a stabilizing cap forms. Below the cap, tubulin dimers are in GDP-bound state, owing to GTPase activity of alpha-tubulin. The sequence is that of Tubulin alpha-4 chain from Gossypium hirsutum (Upland cotton).